The chain runs to 133 residues: MYAENYKRFEELIDKLREFEGAIIVEGPRDEVALRNLGVRAEIIRLSRLPLSEIALIASSYGEVMILTDFDRKGEELARKLLRYLEGYPCRVDSETRKELKRIAKKDIKGIEDLYGLYLKVISVSDPHLEGIR.

In terms of domain architecture, Toprim spans 20–100; that stretch reads EGAIIVEGPR…RVDSETRKEL (81 aa). Residues glutamate 26, aspartate 69, and aspartate 71 each coordinate Mg(2+).

This sequence belongs to the UPF0292 family. Mg(2+) serves as cofactor.

The sequence is that of UPF0292 protein TON_0187 from Thermococcus onnurineus (strain NA1).